Consider the following 396-residue polypeptide: Obg-like ATPase 1 (396 aa).

The OBG-type G domain maps to 23-283 (LKIGIVGLPN…LSAEERQKYL (261 aa)). Residue 32-37 (NVGKST) participates in ATP binding. Residues Ser36 and Thr56 each contribute to the Mg(2+) site. Leu231 contributes to the ATP binding site. Positions 267–274 (LELRLQEL) match the Nuclear export signal motif. At Lys294 the chain carries N6-acetyllysine. The TGS domain maps to 304–387 (QLEYFFTAGP…EDGDIIFFKF (84 aa)).

The protein belongs to the TRAFAC class OBG-HflX-like GTPase superfamily. OBG GTPase family. YchF/OLA1 subfamily. As to quaternary structure, monomer. The cofactor is Mg(2+).

It localises to the cytoplasm. Its subcellular location is the nucleus. It is found in the nucleolus. Its function is as follows. Hydrolyzes ATP, and can also hydrolyze GTP with lower efficiency. Has lower affinity for GTP. This is Obg-like ATPase 1 from Bos taurus (Bovine).